The primary structure comprises 1216 residues: Tyrosine-protein kinase receptor ver-4 (1216 aa).

Over 1 to 789 (MRVSLTEFLV…VKVAGASSSS (789 aa)) the chain is Extracellular. 16 N-linked (GlcNAc...) asparagine glycosylation sites follow: Asn-142, Asn-195, Asn-206, Asn-245, Asn-283, Asn-333, Asn-348, Asn-384, Asn-402, Asn-412, Asn-496, Asn-508, Asn-588, Asn-599, Asn-664, and Asn-703. Ig-like C2-type domains lie at 596 to 691 (KSVN…TSIS) and 697 to 783 (PPFL…VKVA). A disulfide bridge connects residues Cys-619 and Cys-675. A disulfide bond links Cys-721 and Cys-765. A helical transmembrane segment spans residues 790 to 810 (FFWLFITFFAFVVVGIVVSLL). Topologically, residues 811 to 1216 (WKLFGQKDLK…WVQKPTQLFF (406 aa)) are cytoplasmic. In terms of domain architecture, Protein kinase spans 870–1181 (LEILETLGSG…IKLFKNHIQY (312 aa)). ATP is bound by residues 876-884 (LGSGQFGIV) and Lys-908. The Proton acceptor role is filled by Asp-1042.

Belongs to the protein kinase superfamily. Tyr protein kinase family.

Its subcellular location is the cell membrane. It carries out the reaction L-tyrosyl-[protein] + ATP = O-phospho-L-tyrosyl-[protein] + ADP + H(+). Functionally, receptor tyrosine kinase which may be involved, downstream of pvf-1, in the positioning of ray 1, the most anterior ray sensillum in the male tail. In Caenorhabditis elegans, this protein is Tyrosine-protein kinase receptor ver-4.